A 362-amino-acid chain; its full sequence is 3-dehydroquinate synthase (362 aa).

NAD(+)-binding positions include 95 to 99, 119 to 120, Lys-132, and Lys-141; these read GVVGD and TT. Positions 174, 238, and 255 each coordinate Zn(2+).

This sequence belongs to the sugar phosphate cyclases superfamily. Dehydroquinate synthase family. Requires Co(2+) as cofactor. Zn(2+) serves as cofactor. It depends on NAD(+) as a cofactor.

It is found in the cytoplasm. It catalyses the reaction 7-phospho-2-dehydro-3-deoxy-D-arabino-heptonate = 3-dehydroquinate + phosphate. The protein operates within metabolic intermediate biosynthesis; chorismate biosynthesis; chorismate from D-erythrose 4-phosphate and phosphoenolpyruvate: step 2/7. Functionally, catalyzes the conversion of 3-deoxy-D-arabino-heptulosonate 7-phosphate (DAHP) to dehydroquinate (DHQ). This chain is 3-dehydroquinate synthase, found in Chlorobium luteolum (strain DSM 273 / BCRC 81028 / 2530) (Pelodictyon luteolum).